A 148-amino-acid polypeptide reads, in one-letter code: Large-conductance mechanosensitive channel (148 aa).

A run of 2 helical transmembrane segments spans residues 16-36 (VMDL…VNSI) and 89-109 (GSFI…FLMV).

Belongs to the MscL family. Homopentamer.

It localises to the cell inner membrane. Functionally, channel that opens in response to stretch forces in the membrane lipid bilayer. May participate in the regulation of osmotic pressure changes within the cell. The protein is Large-conductance mechanosensitive channel of Paraburkholderia xenovorans (strain LB400).